The sequence spans 308 residues: Uricase-2 (308 aa).

Catalysis depends on charge relay system residues lysine 17 and threonine 63. Urate-binding residues include threonine 63, aspartate 64, phenylalanine 165, arginine 182, valine 237, glutamine 238, and asparagine 264. Catalysis depends on histidine 266, which acts as the Charge relay system. The short motif at 306-308 (SKL) is the Microbody targeting signal element.

It belongs to the uricase family. In terms of assembly, homotetramer. As to expression, expressed predominantly in the uninfected cells of the central tissue of the root nodule. Also expressed in the nodule parenchyma cells and vascular tissue, in the roots, stems and leaves of uninfected adult plants, and in the cotyledons, roots and hypocotyls of developing seedlings. Localized to the metaxylem parenchyma cells and phloem fibers of developing roots.

It is found in the peroxisome. It catalyses the reaction urate + O2 + H2O = 5-hydroxyisourate + H2O2. Its pathway is purine metabolism; urate degradation; (S)-allantoin from urate: step 1/3. Functionally, catalyzes the oxidation of uric acid to 5-hydroxyisourate, which is further processed to form (S)-allantoin. This Phaseolus vulgaris (Kidney bean) protein is Uricase-2 (URIII).